The following is a 179-amino-acid chain: Sperm surface protein Sp17 (179 aa).

Basic and acidic residues predominate over residues 72-109; sequence HAFKDEPPEKSETQKIQPEKVAIEKETMPQETVKEKET. Disordered stretches follow at residues 72–138 and 159–179; these read HAFK…EGLL and TRKE…ENNE. The span at 116–135 shows a compositional bias: acidic residues; sequence EPTEEPQKEEEEEEDEEDLE. The IQ domain maps to 143–172; the sequence is MQDAAVKIQAVFRGHKTRKEYLKKRDSTDE. The span at 161–170 shows a compositional bias: basic and acidic residues; sequence KEYLKKRDST.

In terms of assembly, homodimer. May interact with ROPN1. As to expression, testis- and sperm-specific.

Its subcellular location is the membrane. Functionally, sperm surface zona pellucida binding protein. Helps to bind spermatozoa to the zona pellucida with high affinity. Might function in binding zona pellucida and carbohydrates. The chain is Sperm surface protein Sp17 (SPA17) from Monodelphis domestica (Gray short-tailed opossum).